Consider the following 206-residue polypeptide: Ras-related protein ralB-B (206 aa).

21–28 (GSGGVGKS) serves as a coordination point for GTP. The Effector region signature appears at 43-51 (YEPTKADSY). Residues 68-72 (DTAGQ) and 128-131 (NKSD) contribute to the GTP site. Positions 180-189 (KMSENKDKNG) are enriched in basic and acidic residues. Residues 180-206 (KMSENKDKNGKKSGKSKKGFKQRCCLL) are disordered. A compositionally biased stretch (basic residues) spans 190–200 (KKSGKSKKGFK). Position 203 is a cysteine methyl ester (cysteine 203). Cysteine 203 carries S-geranylgeranyl cysteine lipidation. The propeptide at 204–206 (CLL) is removed in mature form.

It belongs to the small GTPase superfamily. Ras family. In terms of assembly, interacts with ralbp1 and rap1gds1.

Its subcellular location is the cell membrane. It localises to the midbody. The catalysed reaction is GTP + H2O = GDP + phosphate + H(+). Functionally, multifunctional GTPase involved in a variety of cellular processes including gene expression, cell migration, cell proliferation, oncogenic transformation and membrane trafficking. Accomplishes its multiple functions by interacting with distinct downstream effectors. Acts as a GTP sensor for GTP-dependent exocytosis of dense core vesicles. Required both to stabilize the assembly of the exocyst complex and to localize functional exocyst complexes to the leading edge of migrating cells. Required for suppression of apoptosis. In late stages of cytokinesis, upon completion of the bridge formation between dividing cells, mediates exocyst recruitment to the midbody to drive abscission. Regulates the actin cytoskeleton to play a role in gastrulation or neurulation. During the cleavage stages, the GTP-bound form induces a cortical reaction that affects the localization of pigment granules. Activated by the FGF pathway via ras and ral-GDS, but independently of raf. Directs ralbp1 to the plasma membrane. Involved in ligand-dependent receptor mediated endocytosis of the EGF and insulin receptors. This Xenopus laevis (African clawed frog) protein is Ras-related protein ralB-B (ralb-b).